We begin with the raw amino-acid sequence, 72 residues long: Translation initiation factor IF-1 (72 aa).

The S1-like domain maps to 1–72; that stretch reads MAKEEMLEFP…TKGRINYRFK (72 aa).

Belongs to the IF-1 family. Component of the 30S ribosomal translation pre-initiation complex which assembles on the 30S ribosome in the order IF-2 and IF-3, IF-1 and N-formylmethionyl-tRNA(fMet); mRNA recruitment can occur at any time during PIC assembly.

It localises to the cytoplasm. Functionally, one of the essential components for the initiation of protein synthesis. Stabilizes the binding of IF-2 and IF-3 on the 30S subunit to which N-formylmethionyl-tRNA(fMet) subsequently binds. Helps modulate mRNA selection, yielding the 30S pre-initiation complex (PIC). Upon addition of the 50S ribosomal subunit IF-1, IF-2 and IF-3 are released leaving the mature 70S translation initiation complex. In Paracoccus denitrificans (strain Pd 1222), this protein is Translation initiation factor IF-1.